We begin with the raw amino-acid sequence, 2116 residues long: Non-structural polyprotein p200 (2116 aa).

Residues 36–49 (EVRDVVSAAQKRAI) are required for efficient proteolysis and P150-P90 interaction. The 191-residue stretch at 57–247 (VFTQMQVSDH…TRPCTTRIYQ (191 aa)) folds into the Alphavirus-like MT domain. A compositionally biased stretch (low complexity) spans 712 to 723 (AGPGQSAATSSP). Residues 712–782 (AGPGQSAATS…PTSAGPADRA (71 aa)) are disordered. 3 consecutive short sequence motifs (pxxPxR; class II SH3-binding) follow at residues 727–732 (PPPPRC), 747–752 (PPAPAR), and 761–766 (PPAPPR). Residues 745–775 (TPPPAPARDPPPPAPSPPAPPRAGDPVPPTS) are compositionally biased toward pro residues. The 180-residue stretch at 806-985 (SDIVESYARA…LTHASVLVGA (180 aa)) folds into the Macro domain. A disordered region spans residues 992–1031 (VSPPPTEPLASCPAGDPGRPAQRSASPPATPLGDATAPEP). The region spanning 1000–1301 (LASCPAGDPG…WLAVPLSRGG (302 aa)) is the Peptidase C27 domain. Cysteine 1152 (for cysteine protease activity) is an active-site residue. The segment at 1152–1183 (CWLRAAANVAQAARACGAYTSAGCPRCAYGRA) is interaction with host CALM1. Residues cysteine 1175, cysteine 1178, cysteine 1227, and histidine 1273 each contribute to the Zn(2+) site. Positions 1193–1228 (FAALSQRWSASHADASSDGTGDPLDPLMETVGCACS) are EF-hand-like. Histidine 1273 functions as the For cysteine protease activity in the catalytic mechanism. Residues 1320–1468 (EVRRLGDDAM…VPDRWPTERS (149 aa)) enclose the (+)RNA virus helicase ATP-binding domain. Residue 1352 to 1359 (MAAGAGKT) coordinates a ribonucleoside 5'-triphosphate. In terms of domain architecture, (+)RNA virus helicase C-terminal spans 1469–1609 (RHTWRFPDCW…ELKEVPAGID (141 aa)). The segment at 1700–1900 (YRAGEDGSTL…VELEISAALL (201 aa)) is involved in P150-P90 interaction. Positions 1870–1981 (TNAIEVDFTE…FLPEGARSAA (112 aa)) constitute a RdRp catalytic domain. Residues 1902-1906 (LPCAE) carry the Human RB1 binding motif.

Interacts with RNA-directed RNA polymerase p90. Interacts with host CALM1; this interaction is necessary for the protease activity and viral infectivity. Interacts with host C1QBP. Interacts with the capsid protein. In terms of assembly, interacts with human RB1/retinoblastoma protein. Interacts with protease/methyltransferase p150. The cofactor is Zn(2+). Post-translationally, specific enzymatic cleavage by its own cysteine protease yield mature proteins p150 and p90.

Its subcellular location is the host membrane. It localises to the host cytoplasm. The protein resides in the host perinuclear region. It carries out the reaction RNA(n) + a ribonucleoside 5'-triphosphate = RNA(n+1) + diphosphate. It catalyses the reaction a ribonucleoside 5'-triphosphate + H2O = a ribonucleoside 5'-diphosphate + phosphate + H(+). The catalysed reaction is ATP + H2O = ADP + phosphate + H(+). In terms of biological role, probable principal replicase for the negative-strand DNA, which replicates the 40S (+) genomic RNA into (-) antigenomic RNA. It cannot replicate the (-) into (+) until cleaved into p150 and p90 mature proteins. Functionally, protease that cleaves the precursor polyprotein into two mature products. Together with RNA-directed RNA polymerase p90, replicates the 40S genomic and antigenomic RNA by recognizing replications specific signals. The heterodimer P150/p90 is probably the principal replicase for positive-strand genomic RNA and the 24S subgenomic RNA, which codes for structural proteins. Responsible for the mRNA-capping of the viral mRNAs. This function is necessary since all viral RNAs are synthesized in the cytoplasm, and host capping enzymes are restricted to the nucleus. Forms fibers late in the infection that may be involved in cell-to-cell spread of the virus RNA in the absence of virus particle formation. Its function is as follows. Together with protease/methyltransferase p150, replicates the 40S genomic and antigenomic RNA by recognizing replications specific signals. The heterodimer P150/p90 is probably the principal replicase for positive-strand genomic RNA and the 24S subgenomic RNA, which codes for structural proteins. A helicase activity is probably also present. This chain is Non-structural polyprotein p200, found in Homo sapiens (Human).